The chain runs to 529 residues: Bifunctional purine biosynthesis protein PurH (529 aa).

Residues 1-148 form the MGS-like domain; sequence MQPPRPVRRA…KNHKDVAIVV (148 aa).

The protein belongs to the PurH family.

The catalysed reaction is (6R)-10-formyltetrahydrofolate + 5-amino-1-(5-phospho-beta-D-ribosyl)imidazole-4-carboxamide = 5-formamido-1-(5-phospho-D-ribosyl)imidazole-4-carboxamide + (6S)-5,6,7,8-tetrahydrofolate. It carries out the reaction IMP + H2O = 5-formamido-1-(5-phospho-D-ribosyl)imidazole-4-carboxamide. It functions in the pathway purine metabolism; IMP biosynthesis via de novo pathway; 5-formamido-1-(5-phospho-D-ribosyl)imidazole-4-carboxamide from 5-amino-1-(5-phospho-D-ribosyl)imidazole-4-carboxamide (10-formyl THF route): step 1/1. Its pathway is purine metabolism; IMP biosynthesis via de novo pathway; IMP from 5-formamido-1-(5-phospho-D-ribosyl)imidazole-4-carboxamide: step 1/1. In Sodalis glossinidius (strain morsitans), this protein is Bifunctional purine biosynthesis protein PurH.